Consider the following 438-residue polypeptide: V-type ATP synthase beta chain (438 aa).

It belongs to the ATPase alpha/beta chains family.

Its function is as follows. Produces ATP from ADP in the presence of a proton gradient across the membrane. The V-type beta chain is a regulatory subunit. The protein is V-type ATP synthase beta chain of Chlamydia trachomatis serovar L2b (strain UCH-1/proctitis).